Here is a 530-residue protein sequence, read N- to C-terminus: Estrogen receptor beta (530 aa).

A modulating region spans residues 1–148; the sequence is MEIKNSPSSL…SPNAKRDAHF (148 aa). Position 61 is a phosphoserine; alternate (Ser-61). Residue Ser-61 is glycosylated (O-linked (GlcNAc) serine; alternate). Ser-87 and Ser-105 each carry phosphoserine; by MAPK. 2 consecutive NR C4-type zinc fingers follow at residues 149 to 169 and 185 to 209; these read CPVC…CEGC and CPAT…LRKC. The segment at residues 149–214 is a DNA-binding region (nuclear receptor); that stretch reads CPVCSDYASG…RLRKCYEVGM (66 aa). Residues 264 to 498 form the NR LBD domain; the sequence is SPEQLVLTLL…DLLLEMLNAH (235 aa). A compositionally biased stretch (low complexity) spans 506–515; sequence SISGSECSST. A disordered region spans residues 506-530; it reads SISGSECSSTEDSKNKESSQNLQSQ.

The protein belongs to the nuclear hormone receptor family. NR3 subfamily. Binds DNA as a homodimer. Can form a heterodimer with ESR1. Interacts with NCOA1, NCOA3, NCOA5 and NCOA6 coactivators, leading to a strong increase of transcription of target genes. Interacts with UBE1C and AKAP13. Interacts with DNTTIP2. Interacts with CCDC62 in the presence of estradiol/E2; this interaction seems to enhance the transcription of target genes. Interacts with PRMT2. Interacts with CCAR2 (via N-terminus) in a ligand-independent manner. Interacts with DNAAF4. Interacts with RBM39, in the presence of estradiol (E2). Interacts with STUB1/CHIP. Post-translationally, phosphorylation at Ser-87 and Ser-105 recruits NCOA1. As to expression, expressed in the CA1 region of the hippocampus, expression decreases with age (at protein level). Expressed in prostate, ovary, lung, liver, kidney, fat, bone, brain, uterus and testis.

It is found in the nucleus. In terms of biological role, nuclear hormone receptor. Binds estrogens with an affinity similar to that of ESR1/ER-alpha, and activates expression of reporter genes containing estrogen response elements (ERE) in an estrogen-dependent manner. Functionally, lacks ligand binding affinity and suppresses ESR1/ER-alpha and ESR2 isoform 1/ER-beta1 mediated transcriptional activation and may act as a dominant negative regulator of estrogen action. Unable to bind DNA and activate transcription due to the truncation of the DNA binding domain. In Rattus norvegicus (Rat), this protein is Estrogen receptor beta (Esr2).